The primary structure comprises 591 residues: DEAD-box ATP-dependent RNA helicase 17 (591 aa).

Positions 23–52 (CSFTDLGLHPTLCAHLQDKMGFQAPTRIQA) match the Q motif motif. Residues 55–248 (IPVAMSGQHM…KISLKNPVMI (194 aa)) form the Helicase ATP-binding domain. ATP is bound at residue 68-75 (AATGTGKT). The DEAD box motif lies at 181-184 (DEAD). Residues 293 to 482 (QLVQRYVKVS…SFPVNGQRLH (190 aa)) enclose the Helicase C-terminal domain. The segment at 562–591 (GRSHQVQLKKRKKEQKRERPAKRRKIPAKR) is disordered. Residues 568-591 (QLKKRKKEQKRERPAKRRKIPAKR) are compositionally biased toward basic residues.

Belongs to the DEAD box helicase family. DDX31/DBP7 subfamily. In terms of tissue distribution, expressed in flowers and pollen grains.

It localises to the nucleus. The enzyme catalyses ATP + H2O = ADP + phosphate + H(+). Functionally, may play a role in organellar ribosome biogenesis and suppress 16S rRNA maturation. The protein is DEAD-box ATP-dependent RNA helicase 17 of Oryza sativa subsp. japonica (Rice).